The sequence spans 183 residues: Negative modulator of initiation of replication (183 aa).

The segment at 118–122 (RTRIY) is interaction with DNA.

It belongs to the SeqA family. Homodimer. Polymerizes to form helical filaments.

The protein localises to the cytoplasm. Negative regulator of replication initiation, which contributes to regulation of DNA replication and ensures that replication initiation occurs exactly once per chromosome per cell cycle. Binds to pairs of hemimethylated GATC sequences in the oriC region, thus preventing assembly of replication proteins and re-initiation at newly replicated origins. Repression is relieved when the region becomes fully methylated. The chain is Negative modulator of initiation of replication from Proteus mirabilis (strain HI4320).